The sequence spans 201 residues: Large ribosomal subunit protein uL18 (201 aa).

The protein belongs to the universal ribosomal protein uL18 family. In terms of assembly, part of the 50S ribosomal subunit. Contacts the 5S and 23S rRNAs.

In terms of biological role, this is one of the proteins that bind and probably mediate the attachment of the 5S RNA into the large ribosomal subunit, where it forms part of the central protuberance. This Thermococcus kodakarensis (strain ATCC BAA-918 / JCM 12380 / KOD1) (Pyrococcus kodakaraensis (strain KOD1)) protein is Large ribosomal subunit protein uL18.